A 197-amino-acid chain; its full sequence is Glycerol-3-phosphate acyltransferase (197 aa).

Transmembrane regions (helical) follow at residues T7–T27, G55–V75, V78–V98, L116–L136, and V157–L177.

This sequence belongs to the PlsY family. In terms of assembly, probably interacts with PlsX.

The protein resides in the cell inner membrane. It carries out the reaction an acyl phosphate + sn-glycerol 3-phosphate = a 1-acyl-sn-glycero-3-phosphate + phosphate. It functions in the pathway lipid metabolism; phospholipid metabolism. Catalyzes the transfer of an acyl group from acyl-phosphate (acyl-PO(4)) to glycerol-3-phosphate (G3P) to form lysophosphatidic acid (LPA). This enzyme utilizes acyl-phosphate as fatty acyl donor, but not acyl-CoA or acyl-ACP. This chain is Glycerol-3-phosphate acyltransferase, found in Novosphingobium aromaticivorans (strain ATCC 700278 / DSM 12444 / CCUG 56034 / CIP 105152 / NBRC 16084 / F199).